Consider the following 223-residue polypeptide: MDSTTLVYADLNLARIQEPKHDSPPSLSPDTCRCPRWHRLALKFGCAGLILLVLVVIGLCVLVLSVQKSSVQKICADVQENRTHTTGCSAKLECPQDWLSHRDKCFHVSQVSNTWKECRIDCDKKGATLLLIQDQEELRFLLDSIKEKYNSFWIGLSYTLTDMNWKWINGTAFNSDVLKITGVTENGSCAAISGEKVTSEGCSSDNRWICQKELNHETPCNDS.

Over 1–43 the chain is Cytoplasmic; that stretch reads MDSTTLVYADLNLARIQEPKHDSPPSLSPDTCRCPRWHRLALK. The ITIM motif motif lies at 6-11; the sequence is LVYADL. The LCK-binding motif signature appears at 32 to 35; sequence CRCP. The helical; Signal-anchor for type II membrane protein transmembrane segment at 44 to 64 threads the bilayer; the sequence is FGCAGLILLVLVVIGLCVLVL. The Extracellular portion of the chain corresponds to 65–223; it reads SVQKSSVQKI…LNHETPCNDS (159 aa). One can recognise a C-type lectin domain in the interval 101–211; the sequence is HRDKCFHVSQ…CSSDNRWICQ (111 aa). Disulfide bonds link Cys-122/Cys-210 and Cys-189/Cys-202.

As to quaternary structure, homodimer; disulfide-linked. Interacts with tyrosine kinase LCK. Binds PTPN6/SHP-1 in a phosphorylation-dependent manner. Expressed in NK cells and a subset of T-cells.

Its subcellular location is the membrane. Its function is as follows. Receptor for CLEC2D/OCIL. Ligand-binding contributes to inhibition of cytotoxic natural killer (NK) cells. May mediate MHC class I-independent 'missing-self' recognition of allografts, tumor cells and virus-infected cells. This is Killer cell lectin-like receptor subfamily B member 1B allele B (Klrb1b) from Mus musculus (Mouse).